We begin with the raw amino-acid sequence, 211 residues long: Flagellar calcium-binding protein (211 aa).

Residues Met1–Glu29 are disordered. A compositionally biased stretch (basic and acidic residues) spans Leu15–Glu29. 4 EF-hand domains span residues Glu45–Leu80, Asp81–Phe116, Tyr127–Trp162, and Ala164–Asp199. 5 residues coordinate Ca(2+): Asp58, Asn60, Thr62, Lys64, and Glu69. 9 residues coordinate Ca(2+): Asp140, Ser142, Asn144, Glu151, Asp177, Asn179, Thr181, Ser183, and Glu188.

This sequence belongs to the calflagin family.

It localises to the cell projection. It is found in the cilium. The protein localises to the flagellum. Functionally, may contribute to the rapid motility of the trypanosomes, playing a role either in flagellar structure or in calcium metabolism. Could alternate between a GDP-bound inactive form to a calcium/GTP-bound active form. The sequence is that of Flagellar calcium-binding protein (FCABP) from Trypanosoma cruzi.